The following is a 210-amino-acid chain: 3-hexulose-6-phosphate synthase (210 aa).

This sequence belongs to the HPS/KGPDC family. HPS subfamily.

It carries out the reaction D-ribulose 5-phosphate + formaldehyde = D-arabino-hex-3-ulose 6-phosphate. It participates in one-carbon metabolism; formaldehyde assimilation via RuMP pathway; D-fructose 6-phosphate from D-ribulose 5-phosphate and formaldehyde: step 1/2. Catalyzes the condensation of ribulose 5-phosphate with formaldehyde to form 3-hexulose 6-phosphate. The sequence is that of 3-hexulose-6-phosphate synthase from Staphylococcus haemolyticus (strain JCSC1435).